A 102-amino-acid polypeptide reads, in one-letter code: Small ribosomal subunit protein uS10 (102 aa).

This sequence belongs to the universal ribosomal protein uS10 family. In terms of assembly, part of the 30S ribosomal subunit.

Functionally, involved in the binding of tRNA to the ribosomes. In Bartonella henselae (strain ATCC 49882 / DSM 28221 / CCUG 30454 / Houston 1) (Rochalimaea henselae), this protein is Small ribosomal subunit protein uS10.